Here is a 115-residue protein sequence, read N- to C-terminus: Disintegrin EC6 subunit alpha (115 aa).

The N-terminal stretch at 1-20 (MIQVLLVIICLAVFPYQGSS) is a signal peptide. A propeptide spanning residues 21–47 (IILESGNINDYEIVYPKKVAVLPTGAM) is cleaved from the precursor. Residues 48–112 (NSVHPCCDPV…DCPRNRYKGK (65 aa)) form the Disintegrin domain. 4 cysteine pairs are disulfide-bonded: C53–C76, C67–C73, C72–C97, and C85–C104. The Cell attachment site; atypical (MLD) motif lies at 89–91 (MLD).

It belongs to the disintegrin family. Dimeric disintegrin subfamily. Heterodimer with subunit beta; disulfide-linked. In terms of tissue distribution, expressed by the venom gland.

It is found in the secreted. In terms of biological role, potently inhibits adhesion of alpha-4/beta-1 (ITGA4/ITGB1) and alpha-9/beta-1 (ITGA9/ITGB1) integrins to VCAM1, and adhesion of alpha-5/beta-1 (ITGA5/ITGB1) integrin to fibronectin. Has a much less effect on alpha-IIb/beta-3 (ITGA2B/ITGB3) integrin. Also potently inhibits neutrophil migration across TNF-alpha-activated human umbilical endothelial cells. The chain is Disintegrin EC6 subunit alpha from Echis carinatus sochureki (Saw-scaled viper).